The following is a 141-amino-acid chain: Large ribosomal subunit protein uL11 (141 aa).

This sequence belongs to the universal ribosomal protein uL11 family. Part of the ribosomal stalk of the 50S ribosomal subunit. Interacts with L10 and the large rRNA to form the base of the stalk. L10 forms an elongated spine to which L12 dimers bind in a sequential fashion forming a multimeric L10(L12)X complex. One or more lysine residues are methylated.

Its function is as follows. Forms part of the ribosomal stalk which helps the ribosome interact with GTP-bound translation factors. The polypeptide is Large ribosomal subunit protein uL11 (Exiguobacterium sibiricum (strain DSM 17290 / CCUG 55495 / CIP 109462 / JCM 13490 / 255-15)).